The sequence spans 499 residues: Probable cytosol aminopeptidase (499 aa).

Residues Lys-263 and Asp-268 each contribute to the Mn(2+) site. Lys-275 is a catalytic residue. Mn(2+) contacts are provided by Asp-286, Asp-345, and Glu-347. Residue Arg-349 is part of the active site.

Belongs to the peptidase M17 family. The cofactor is Mn(2+).

The protein localises to the cytoplasm. The catalysed reaction is Release of an N-terminal amino acid, Xaa-|-Yaa-, in which Xaa is preferably Leu, but may be other amino acids including Pro although not Arg or Lys, and Yaa may be Pro. Amino acid amides and methyl esters are also readily hydrolyzed, but rates on arylamides are exceedingly low.. The enzyme catalyses Release of an N-terminal amino acid, preferentially leucine, but not glutamic or aspartic acids.. Its function is as follows. Presumably involved in the processing and regular turnover of intracellular proteins. Catalyzes the removal of unsubstituted N-terminal amino acids from various peptides. This is Probable cytosol aminopeptidase from Chlamydia trachomatis serovar L2 (strain ATCC VR-902B / DSM 19102 / 434/Bu).